Here is a 104-residue protein sequence, read N- to C-terminus: Protein U9 (104 aa).

The sequence is that of Protein U9 (U9) from Homo sapiens (Human).